Consider the following 459-residue polypeptide: uncharacterized protein (459 aa).

Residues 5 to 63 (PVEEGQKFPLTIRRMGINGEGIGYFKKAVVFVPGAITGEEVVVEAVKVRDRFTEAKLNK) form the TRAM domain. [4Fe-4S] cluster contacts are provided by Cys-76, Cys-82, Cys-85, and Cys-166. S-adenosyl-L-methionine contacts are provided by Gln-290, Tyr-319, Asp-340, and Asp-388. Cys-415 acts as the Nucleophile in catalysis.

The protein belongs to the class I-like SAM-binding methyltransferase superfamily. RNA M5U methyltransferase family.

This is an uncharacterized protein from Listeria monocytogenes serotype 4b (strain F2365).